The primary structure comprises 211 residues: Probable nicotinate-nucleotide adenylyltransferase (211 aa).

The protein belongs to the NadD family.

It catalyses the reaction nicotinate beta-D-ribonucleotide + ATP + H(+) = deamido-NAD(+) + diphosphate. Its pathway is cofactor biosynthesis; NAD(+) biosynthesis; deamido-NAD(+) from nicotinate D-ribonucleotide: step 1/1. Its function is as follows. Catalyzes the reversible adenylation of nicotinate mononucleotide (NaMN) to nicotinic acid adenine dinucleotide (NaAD). The protein is Probable nicotinate-nucleotide adenylyltransferase of Shewanella frigidimarina (strain NCIMB 400).